A 217-amino-acid polypeptide reads, in one-letter code: Large ribosomal subunit protein uL29m (217 aa).

The protein belongs to the universal ribosomal protein uL29 family. Component of the mitochondrial large ribosomal subunit. Mature mitochondrial ribosomes consist of a small (37S) and a large (54S) subunit. The 37S subunit contains at least 33 different proteins and 1 molecule of RNA (15S). The 54S subunit contains at least 45 different proteins and 1 molecule of RNA (21S).

The protein localises to the mitochondrion. In Aspergillus fumigatus (strain ATCC MYA-4609 / CBS 101355 / FGSC A1100 / Af293) (Neosartorya fumigata), this protein is Large ribosomal subunit protein uL29m (mrpl4).